A 445-amino-acid polypeptide reads, in one-letter code: tRNA-2-methylthio-N(6)-dimethylallyladenosine synthase (445 aa).

One can recognise an MTTase N-terminal domain in the interval 4-121; it reads NKIYIKTWGC…LPNMIQEVKK (118 aa). 6 residues coordinate [4Fe-4S] cluster: cysteine 13, cysteine 50, cysteine 84, cysteine 158, cysteine 162, and cysteine 165. The region spanning 144–376 is the Radical SAM core domain; the sequence is RKPKVTAFVS…QTLIRNNTTM (233 aa). In terms of domain architecture, TRAM spans 379–442; it reads QKMLGSIQSV…PNSLRGSYEK (64 aa).

The protein belongs to the methylthiotransferase family. MiaB subfamily. Monomer. The cofactor is [4Fe-4S] cluster.

The protein localises to the cytoplasm. It catalyses the reaction N(6)-dimethylallyladenosine(37) in tRNA + (sulfur carrier)-SH + AH2 + 2 S-adenosyl-L-methionine = 2-methylsulfanyl-N(6)-dimethylallyladenosine(37) in tRNA + (sulfur carrier)-H + 5'-deoxyadenosine + L-methionine + A + S-adenosyl-L-homocysteine + 2 H(+). Catalyzes the methylthiolation of N6-(dimethylallyl)adenosine (i(6)A), leading to the formation of 2-methylthio-N6-(dimethylallyl)adenosine (ms(2)i(6)A) at position 37 in tRNAs that read codons beginning with uridine. The sequence is that of tRNA-2-methylthio-N(6)-dimethylallyladenosine synthase from Buchnera aphidicola subsp. Baizongia pistaciae (strain Bp).